We begin with the raw amino-acid sequence, 443 residues long: Xaa-Pro dipeptidase (443 aa).

Positions 246, 257, 339, 384, and 423 each coordinate Mn(2+).

The protein belongs to the peptidase M24B family. Bacterial-type prolidase subfamily. It depends on Mn(2+) as a cofactor.

It catalyses the reaction Xaa-L-Pro dipeptide + H2O = an L-alpha-amino acid + L-proline. Its function is as follows. Splits dipeptides with a prolyl residue in the C-terminal position. This Erwinia tasmaniensis (strain DSM 17950 / CFBP 7177 / CIP 109463 / NCPPB 4357 / Et1/99) protein is Xaa-Pro dipeptidase.